The chain runs to 396 residues: Dihydrolipoyllysine-residue acetyltransferase component of pyruvate dehydrogenase complex (396 aa).

The region spanning 1–69 (MPDIGLEEVE…KTDALIMRCE (69 aa)) is the Lipoyl-binding domain. Residue Lys35 is modified to N6-lipoyllysine. Residues 104-141 (HATPLIRRLARNLNINLYDVVGTGPKNRILKEDLDLYQ) enclose the Peripheral subunit-binding (PSBD) domain. His369 is a catalytic residue.

The protein belongs to the 2-oxoacid dehydrogenase family. As to quaternary structure, forms a 24-polypeptide structural core with octahedral symmetry. (R)-lipoate serves as cofactor.

It carries out the reaction N(6)-[(R)-dihydrolipoyl]-L-lysyl-[protein] + acetyl-CoA = N(6)-[(R)-S(8)-acetyldihydrolipoyl]-L-lysyl-[protein] + CoA. Its function is as follows. The pyruvate dehydrogenase complex catalyzes the overall conversion of pyruvate to acetyl-CoA and CO(2). It contains multiple copies of three enzymatic components: pyruvate dehydrogenase (E1), dihydrolipoamide acetyltransferase (E2) and lipoamide dehydrogenase (E3). The polypeptide is Dihydrolipoyllysine-residue acetyltransferase component of pyruvate dehydrogenase complex (aceF) (Buchnera aphidicola subsp. Acyrthosiphon pisum (strain APS) (Acyrthosiphon pisum symbiotic bacterium)).